A 459-amino-acid polypeptide reads, in one-letter code: Bifunctional protein GlmU (459 aa).

Residues 1–229 (MSNFAIILAA…FDESLGVNDR (229 aa)) are pyrophosphorylase. UDP-N-acetyl-alpha-D-glucosamine-binding positions include 8–11 (LAAG), Lys-22, Gln-72, and 77–78 (GT). Asp-102 lines the Mg(2+) pocket. UDP-N-acetyl-alpha-D-glucosamine is bound by residues Gly-139, Glu-154, Asn-169, and Asn-227. Asn-227 is a binding site for Mg(2+). Positions 230 to 250 (VALATAESVMRRRINHKHMVN) are linker. Positions 251 to 459 (GVSFVNPEAT…TRLPHHPKNQ (209 aa)) are N-acetyltransferase. 2 residues coordinate UDP-N-acetyl-alpha-D-glucosamine: Arg-332 and Lys-350. His-362 serves as the catalytic Proton acceptor. Residues Tyr-365 and Asn-376 each coordinate UDP-N-acetyl-alpha-D-glucosamine. Acetyl-CoA is bound by residues Ala-379, 385–386 (NY), Ser-404, Ala-422, and Arg-439.

In the N-terminal section; belongs to the N-acetylglucosamine-1-phosphate uridyltransferase family. It in the C-terminal section; belongs to the transferase hexapeptide repeat family. As to quaternary structure, homotrimer. It depends on Mg(2+) as a cofactor.

Its subcellular location is the cytoplasm. It catalyses the reaction alpha-D-glucosamine 1-phosphate + acetyl-CoA = N-acetyl-alpha-D-glucosamine 1-phosphate + CoA + H(+). It carries out the reaction N-acetyl-alpha-D-glucosamine 1-phosphate + UTP + H(+) = UDP-N-acetyl-alpha-D-glucosamine + diphosphate. It participates in nucleotide-sugar biosynthesis; UDP-N-acetyl-alpha-D-glucosamine biosynthesis; N-acetyl-alpha-D-glucosamine 1-phosphate from alpha-D-glucosamine 6-phosphate (route II): step 2/2. The protein operates within nucleotide-sugar biosynthesis; UDP-N-acetyl-alpha-D-glucosamine biosynthesis; UDP-N-acetyl-alpha-D-glucosamine from N-acetyl-alpha-D-glucosamine 1-phosphate: step 1/1. It functions in the pathway bacterial outer membrane biogenesis; LPS lipid A biosynthesis. Catalyzes the last two sequential reactions in the de novo biosynthetic pathway for UDP-N-acetylglucosamine (UDP-GlcNAc). The C-terminal domain catalyzes the transfer of acetyl group from acetyl coenzyme A to glucosamine-1-phosphate (GlcN-1-P) to produce N-acetylglucosamine-1-phosphate (GlcNAc-1-P), which is converted into UDP-GlcNAc by the transfer of uridine 5-monophosphate (from uridine 5-triphosphate), a reaction catalyzed by the N-terminal domain. In Streptococcus pneumoniae serotype 2 (strain D39 / NCTC 7466), this protein is Bifunctional protein GlmU.